The primary structure comprises 1891 residues: TATA-binding protein-associated factor mot1 (1891 aa).

One copy of the HEAT 1 repeat lies at 30-68 (PDELFNLLGRILPYLRSKSWDTRAAAAKAIGLIVANADT). Disordered stretches follow at residues 184–216 (FVAS…LSKR), 241–283 (LSSR…LDRS), and 295–316 (FKGA…EGPN). Residues 264 to 275 (ENGEERNGDSKP) are compositionally biased toward basic and acidic residues. 2 HEAT repeats span residues 473–511 (SKLM…EFVK) and 569–606 (SSFG…LEGE). Low complexity predominate over residues 699–710 (SAAAPARSSPAS). Residues 699–740 (SAAAPARSSPASNTPEGTKGRRRKSEKKEAPPPSAHNVDGHM) form a disordered region. 4 HEAT repeats span residues 957–996 (PKKP…YYTT), 1139–1177 (YPWV…VITV), 1181–1216 (TMLV…VMED), and 1219–1257 (LPYV…LVPL). In terms of domain architecture, Helicase ATP-binding spans 1316-1489 (AFLNRYNLHG…WSLFDFLMPG (174 aa)). 1329–1336 (DDMGLGKT) contributes to the ATP binding site. A DEAH box motif is present at residues 1440-1443 (DEGH). One copy of the HEAT 8 repeat lies at 1526 to 1565 (EALHKQVLPFLLRRLKEEVLNDLPPKIIQNYYCDPSELQR). Residues 1663-1813 (DLSGASYVSP…STVVNQQNAG (151 aa)) enclose the Helicase C-terminal domain.

Belongs to the SNF2/RAD54 helicase family. As to quaternary structure, forms the NCT transcriptional regulatory complex with nctA and nctB.

It is found in the nucleus. Its function is as follows. Regulates transcription in association with TATA binding protein (TBP). Removes TBP from the TATA box via its C-terminal ATPase activity. Both transcription activation and repression require its ATPase activity. Part of the NCT transcriptional regulatory complex that acts as a key regulator of ergosterol biosynthesis and the azole exporter cdr1B. The NCT complex binds the promoters of genes linked to azole susceptibility, and especially represses the expression of cdr1B transporter. In Aspergillus fumigatus (strain CBS 144.89 / FGSC A1163 / CEA10) (Neosartorya fumigata), this protein is TATA-binding protein-associated factor mot1.